Reading from the N-terminus, the 217-residue chain is Homeobox protein Hox-B7 (217 aa).

An Antp-type hexapeptide motif is present at residues 126 to 131 (IYPWMR). The segment at residues 137-196 (RKRGRQTYTRYQTLELEKEFHYNRYLTRRRRIEIAHTLCLTERQIKIWFQNRRMKWKKEN) is a DNA-binding region (homeobox). The disordered stretch occupies residues 192–217 (WKKENKTSGPGTTGQDKAEAEEEEEE).

Belongs to the Antp homeobox family. In terms of assembly, forms a DNA-binding heterodimer with transcription factor PBX1.

The protein resides in the nucleus. Functionally, sequence-specific transcription factor which is part of a developmental regulatory system that provides cells with specific positional identities on the anterior-posterior axis. In Mus musculus (Mouse), this protein is Homeobox protein Hox-B7 (Hoxb7).